Consider the following 454-residue polypeptide: UDP-N-acetylmuramate--L-alanine ligase (454 aa).

ATP is bound at residue 112–118 (GTHGKTT).

This sequence belongs to the MurCDEF family.

The protein localises to the cytoplasm. It catalyses the reaction UDP-N-acetyl-alpha-D-muramate + L-alanine + ATP = UDP-N-acetyl-alpha-D-muramoyl-L-alanine + ADP + phosphate + H(+). Its pathway is cell wall biogenesis; peptidoglycan biosynthesis. Its function is as follows. Cell wall formation. This Oleidesulfovibrio alaskensis (strain ATCC BAA-1058 / DSM 17464 / G20) (Desulfovibrio alaskensis) protein is UDP-N-acetylmuramate--L-alanine ligase.